The sequence spans 659 residues: Siderophore transporter fer7 (659 aa).

The interval 1–62 (MSNQAQDQPE…ADASSAREGQ (62 aa)) is disordered. Over residues 31-41 (QSVSAHGNTSL) the composition is skewed to polar residues. N-linked (GlcNAc...) asparagine glycosylation occurs at Asn38. Basic and acidic residues predominate over residues 42-54 (NKKDRVSAVRDAD). Transmembrane regions (helical) follow at residues 79–99 (NSPI…CFAL), 121–141 (LFGV…PFIA), 150–170 (QTAY…VASA), 208–228 (GVVT…GNLI), 245–265 (GMFA…LMYV), 316–336 (LVGL…FSIY), 348–368 (IIAM…WEIL), and 379–399 (VWYN…FMGG). Asn415 is a glycosylation site (N-linked (GlcNAc...) asparagine). 2 helical membrane passes run 424-444 (VVNA…GFYL) and 451-471 (KFLQ…YLYG). N-linked (GlcNAc...) asparagine glycosylation occurs at Asn475. The next 3 helical transmembrane spans lie at 478–498 (TMVV…SVVG), 528–548 (AIGS…YLAA), and 590–610 (PIFI…LLMP).

Belongs to the major facilitator superfamily.

The protein localises to the membrane. Its function is as follows. Siderophore transporter; part of the gene cluster that mediates the biosynthesis of siderophore ferrichrome A which is contributing to organismal virulence. In Mycosarcoma maydis (Corn smut fungus), this protein is Siderophore transporter fer7.